The following is a 164-amino-acid chain: Cyclic pyranopterin monophosphate synthase (164 aa).

Residues 75–77 (MCH) and 116–117 (ME) contribute to the substrate site. The active site involves Asp131.

Belongs to the MoaC family. As to quaternary structure, homohexamer; trimer of dimers.

The catalysed reaction is (8S)-3',8-cyclo-7,8-dihydroguanosine 5'-triphosphate = cyclic pyranopterin phosphate + diphosphate. The protein operates within cofactor biosynthesis; molybdopterin biosynthesis. Functionally, catalyzes the conversion of (8S)-3',8-cyclo-7,8-dihydroguanosine 5'-triphosphate to cyclic pyranopterin monophosphate (cPMP). The polypeptide is Cyclic pyranopterin monophosphate synthase (Staphylococcus aureus (strain Mu3 / ATCC 700698)).